The primary structure comprises 256 residues: MAFNGIALLITATIFIGSCYANYCDSSLCRQGPHVACNAPQQFGPACGNNRKFVPMDSKLKTIILNTHNKLRAEIANGKHGFPQAARMPTLVWDDELAHIASFNARKCIFAHDKCRNTRQFKFSGQNLAITTFYGFNFQAGDRAENFTQEWFNEHKDCPKSYVDAYPSSHRGPQIGHFTQLVNDRTWKVGCSMMHYITNGKMINYYLVCNYTMTNMIGEPIYTKGRTGSKCETGQNPQFKGLCSPRERVKSESYNG.

A signal peptide spans 1-21 (MAFNGIALLITATIFIGSCYA). The region spanning 65–211 (LNTHNKLRAE…MINYYLVCNY (147 aa)) is the SCP domain. 2 N-linked (GlcNAc...) asparagine glycosylation sites follow: Asn-146 and Asn-210.

Belongs to the CRISP family.

It is found in the secreted. In terms of biological role, activates autophagy in human monocytic cells, dendritic cells and macrophages. Functionally, (Microbial infection) Promotes Zika virus replication in human dendritic cells and macrophages. Facilitates Zika virus transmission from infected mosquitoes to the host in mouse model. This Aedes albopictus (Asian tiger mosquito) protein is Venom allergen-1.